Here is a 476-residue protein sequence, read N- to C-terminus: Probable G-protein coupled receptor No9 (476 aa).

Over 1 to 36 the chain is Extracellular; the sequence is MEGPPLSPAPADNVTLNVSCGRPATLFDWADHRLIS. N-linked (GlcNAc...) asparagine glycans are attached at residues N13 and N17. The helical transmembrane segment at 37–60 threads the bilayer; the sequence is LLALAFLNLMVVAGNLLVVMAVFV. The Cytoplasmic portion of the chain corresponds to 61 to 69; it reads HSKLRTVTN. A helical membrane pass occupies residues 70–93; the sequence is LFIVSLACADLLVGMLVLPFSATL. The Extracellular portion of the chain corresponds to 94–103; it reads EVLDVWLYGD. A helical membrane pass occupies residues 104–127; sequence VWCSVWLAVDVWMCTSSILNLCAI. C106 and C192 form a disulfide bridge. Topologically, residues 128–152 are cytoplasmic; it reads SLDRYLAVSQPISYPSLMSTRRAKQ. Residues 153–172 form a helical membrane-spanning segment; sequence LIAAVWVLSFVICFPPLVGW. Topologically, residues 173 to 200 are extracellular; it reads NDRPGTLIGSRGSSACRLTCELTNERGY. Residues 201–221 traverse the membrane as a helical segment; sequence VIYSALGSFFLPSTVMLFFYG. Residues 222 to 375 are Cytoplasmic-facing; that stretch reads RIYRTAVSTT…FRMETKAAKT (154 aa). Positions 266-278 are enriched in low complexity; that stretch reads AAAGGARAHGQVR. Disordered stretches follow at residues 266–293 and 317–351; these read AAAG…NKPS and DSRP…PRFI. A helical membrane pass occupies residues 376–396; that stretch reads VGIIVGLFILCWLPFFVCYLV. At 397-406 the chain is on the extracellular side; sequence RGFCADCVPP. A helical transmembrane segment spans residues 407–430; it reads LLFSVFFWLGYCNSAVNPCVYALC. The Cytoplasmic segment spans residues 431-476; that stretch reads SRDFRFAFSSILCKCVCRRGAMERRFRRTLLVGNRSQTEEDCEVAD.

It belongs to the G-protein coupled receptor 1 family.

It localises to the cell membrane. Orphan G-protein coupled receptor. This chain is Probable G-protein coupled receptor No9, found in Amphibalanus amphitrite (Striped barnacle).